A 430-amino-acid chain; its full sequence is Adenylosuccinate synthetase (430 aa).

Residues glycine 12–lysine 18 and glycine 40–threonine 42 contribute to the GTP site. Catalysis depends on aspartate 13, which acts as the Proton acceptor. 2 residues coordinate Mg(2+): aspartate 13 and glycine 40. IMP-binding positions include aspartate 13–lysine 16, asparagine 38–histidine 41, threonine 128, arginine 142, glutamine 223, threonine 238, and arginine 302. Histidine 41 (proton donor) is an active-site residue. Position 298-304 (threonine 298–arginine 304) interacts with substrate. Residues arginine 304, serine 330–aspartate 332, and serine 412–glycine 414 contribute to the GTP site.

The protein belongs to the adenylosuccinate synthetase family. Homodimer. Mg(2+) serves as cofactor.

It is found in the cytoplasm. The catalysed reaction is IMP + L-aspartate + GTP = N(6)-(1,2-dicarboxyethyl)-AMP + GDP + phosphate + 2 H(+). It functions in the pathway purine metabolism; AMP biosynthesis via de novo pathway; AMP from IMP: step 1/2. Its function is as follows. Plays an important role in the de novo pathway of purine nucleotide biosynthesis. Catalyzes the first committed step in the biosynthesis of AMP from IMP. The sequence is that of Adenylosuccinate synthetase from Streptococcus suis (strain 98HAH33).